The chain runs to 209 residues: Molybdenum cofactor guanylyltransferase (209 aa).

Residues 13-15, Lys-26, Asn-54, Asp-72, and Asp-107 each bind GTP; that span reads LAG. Residue Asp-107 participates in Mg(2+) binding.

It belongs to the MobA family. As to quaternary structure, monomer. Requires Mg(2+) as cofactor.

The protein localises to the cytoplasm. The enzyme catalyses Mo-molybdopterin + GTP + H(+) = Mo-molybdopterin guanine dinucleotide + diphosphate. Transfers a GMP moiety from GTP to Mo-molybdopterin (Mo-MPT) cofactor (Moco or molybdenum cofactor) to form Mo-molybdopterin guanine dinucleotide (Mo-MGD) cofactor. This Nitrobacter hamburgensis (strain DSM 10229 / NCIMB 13809 / X14) protein is Molybdenum cofactor guanylyltransferase.